Reading from the N-terminus, the 92-residue chain is Small ribosomal subunit protein uS19 (92 aa).

The protein belongs to the universal ribosomal protein uS19 family.

Its function is as follows. Protein S19 forms a complex with S13 that binds strongly to the 16S ribosomal RNA. The chain is Small ribosomal subunit protein uS19 from Aeromonas hydrophila subsp. hydrophila (strain ATCC 7966 / DSM 30187 / BCRC 13018 / CCUG 14551 / JCM 1027 / KCTC 2358 / NCIMB 9240 / NCTC 8049).